The primary structure comprises 99 residues: Nucleoid-associated protein SpyM3_1606 (99 aa).

It belongs to the YbaB/EbfC family. Homodimer.

It localises to the cytoplasm. It is found in the nucleoid. Functionally, binds to DNA and alters its conformation. May be involved in regulation of gene expression, nucleoid organization and DNA protection. The sequence is that of Nucleoid-associated protein SpyM3_1606 from Streptococcus pyogenes serotype M3 (strain ATCC BAA-595 / MGAS315).